The primary structure comprises 596 residues: Structural protein precursor VP8 (596 aa).

Its subcellular location is the virion. In terms of biological role, 120 subunits of the putative clamp protein VP8b appear to stabilize the capsid shell. This chain is Structural protein precursor VP8, found in Oryza latifolia (Indian wild rice).